Consider the following 569-residue polypeptide: Neutral leucine aminopeptidase, chloroplastic (569 aa).

A chloroplast-targeting transit peptide spans 1 to 48 (MNGVLCSSSSSFHSYPSIFTKFQSSPIWSFSISVTPLCSRRAKRMAHS). Residues Lys-339 and Asp-344 each coordinate Mn(2+). Lys-351 is a catalytic residue. Mn(2+)-binding residues include Asp-364, Asp-424, and Glu-426. The active site involves Arg-428.

It belongs to the peptidase M17 family. Homohexamer (dimer of homotrimers). Mn(2+) serves as cofactor. As to expression, expressed constitutively at low levels. Expressed in vegetative and reproductive organs, including leaves, stems, roots, cotyledons (after imbibition), pistils, sepals, petals, stamens, and floral buds (at protein level). Present at very low levels in healthy leaves.

It localises to the plastid. Its subcellular location is the chloroplast. It catalyses the reaction Release of an N-terminal amino acid, Xaa-|-Yaa-, in which Xaa is preferably Leu, but may be other amino acids including Pro although not Arg or Lys, and Yaa may be Pro. Amino acid amides and methyl esters are also readily hydrolyzed, but rates on arylamides are exceedingly low.. It carries out the reaction Release of N-terminal proline from a peptide.. Catalyzes the removal of unsubstituted N-terminal amino acids from various peptides. When associated as homohexamer, catalyzes the proteolyzes of Xaa-Leu dipeptides. Possesses leucine aminopeptidase activity against the model substrate leucine-amido methyl coumarin. Presumably involved in the processing and regular turnover of intracellular proteins. In terms of biological role, functions as a molecular chaperone to protect proteins from heat-induced damage. The chain is Neutral leucine aminopeptidase, chloroplastic from Solanum lycopersicum (Tomato).